The following is a 388-amino-acid chain: 2-Hydroxyacid oxidase (388 aa).

Positions Met1–Ser21 are disordered. One can recognise an FMN hydroxy acid dehydrogenase domain in the interval Asn26–Lys384. A glyoxylate-binding site is contributed by Tyr52. Residues Pro105–Ala107, Ser134, Gln156–Tyr158, and Thr184 each bind FMN. Tyr158 contacts glyoxylate. A glyoxylate-binding site is contributed by Arg193. FMN contacts are provided by Lys255 and Ser277. 2 residues coordinate glyoxylate: His279 and Arg282. The active-site Proton acceptor is His279. FMN contacts are provided by residues Asp310–Arg314 and Gly333–Arg334.

This sequence belongs to the FMN-dependent alpha-hydroxy acid dehydrogenase family. In terms of assembly, homotetramer. FMN serves as cofactor.

It catalyses the reaction glycolate + O2 = glyoxylate + H2O2. The enzyme catalyses a (2S)-2-hydroxycarboxylate + O2 = a 2-oxocarboxylate + H2O2. In terms of biological role, catalyzes the oxidation of glycolate to glyoxylate, with a reduction of O2 to H2O2. May use other 2-hydroxyacids as substrates. This chain is 2-Hydroxyacid oxidase (haox), found in Dictyostelium discoideum (Social amoeba).